Here is a 229-residue protein sequence, read N- to C-terminus: Potassium/proton antiporter CemA (229 aa).

Helical transmembrane passes span 6 to 26, 107 to 127, 152 to 172, and 189 to 209; these read AFIP…ISLC, IFHF…SFWG, FLIL…GWEL, and ILSG…KYWI.

The protein belongs to the CemA family.

The protein localises to the plastid. It localises to the chloroplast inner membrane. It catalyses the reaction K(+)(in) + H(+)(out) = K(+)(out) + H(+)(in). In terms of biological role, contributes to K(+)/H(+) antiport activity by supporting proton efflux to control proton extrusion and homeostasis in chloroplasts in a light-dependent manner to modulate photosynthesis. Prevents excessive induction of non-photochemical quenching (NPQ) under continuous-light conditions. Indirectly promotes efficient inorganic carbon uptake into chloroplasts. The protein is Potassium/proton antiporter CemA of Aethionema grandiflorum (Persian stone-cress).